The sequence spans 86 residues: Small ribosomal subunit protein uS17 (86 aa).

This sequence belongs to the universal ribosomal protein uS17 family. As to quaternary structure, part of the 30S ribosomal subunit.

Its function is as follows. One of the primary rRNA binding proteins, it binds specifically to the 5'-end of 16S ribosomal RNA. In Lactococcus lactis subsp. cremoris (strain SK11), this protein is Small ribosomal subunit protein uS17.